Consider the following 536-residue polypeptide: MNELGVHNPANGVAELGLGEASRVFYNLNESELYEHAIRNGEAELTIDGALRAVTGQHTGRSPKDKFVVRDASTENTIWWDNNKPLSPENFELLRQDMLAHAAGKTLYVQDLIGGADEENALPTRVVTELAWHSLFIRNLLIRPKRETLSGFSQKLTIINLPSFKADPARHGVRSETVIACDLTNGLVLIGGTSYAGENKKSVFTVLNYLLPAKGVMPMHCSANVGPEGDSAVFFGLSGTGKTTLSADPARTLIGDDEHGWGEHGIFNFEGGCYAKAIKLSSEAEPEIYAATNRFGTVLENVVLDESRVPDFNDNSLTENTRSAYPLHFIPNASETGIAGHPKTIIMLTADAFGVLPPIARLTPEQAMYHFLSGYTAKVAGTEKGVTEPEATFSTCFGAPFMPRHPAEYGNLLRELIGKHGVDCWLVNTGWTGGAYGIGKRMPIKATRALLTAALTGDLKNAQFRTDANFGFAVPLSLDGVDGAILDPRSTWADGAAYDAQAKKLVSMFVSNFTKFEDHVDSKVRDAAPGLLLAAE.

Substrate-binding residues include Arg-61, Tyr-195, and Lys-201. Residues Lys-201, His-220, and 236–244 (GLSGTGKTT) contribute to the ATP site. Residues Lys-201 and His-220 each contribute to the Mn(2+) site. Asp-257 is a binding site for Mn(2+). Positions 285, 322, and 447 each coordinate ATP. A substrate-binding site is contributed by Arg-322.

This sequence belongs to the phosphoenolpyruvate carboxykinase (ATP) family. Mn(2+) is required as a cofactor.

The protein resides in the cytoplasm. The catalysed reaction is oxaloacetate + ATP = phosphoenolpyruvate + ADP + CO2. Its pathway is carbohydrate biosynthesis; gluconeogenesis. In terms of biological role, involved in the gluconeogenesis. Catalyzes the conversion of oxaloacetate (OAA) to phosphoenolpyruvate (PEP) through direct phosphoryl transfer between the nucleoside triphosphate and OAA. The chain is Phosphoenolpyruvate carboxykinase (ATP) from Agrobacterium fabrum (strain C58 / ATCC 33970) (Agrobacterium tumefaciens (strain C58)).